A 227-amino-acid polypeptide reads, in one-letter code: Cytidylate kinase (227 aa).

Residue 10-18 coordinates ATP; that stretch reads GPASSGKST.

Belongs to the cytidylate kinase family. Type 1 subfamily.

Its subcellular location is the cytoplasm. The enzyme catalyses CMP + ATP = CDP + ADP. It catalyses the reaction dCMP + ATP = dCDP + ADP. This chain is Cytidylate kinase, found in Streptococcus agalactiae serotype Ia (strain ATCC 27591 / A909 / CDC SS700).